Consider the following 371-residue polypeptide: Proton-coupled zinc antiporter SLC30A2 (371 aa).

Topologically, residues 1-69 (MQTMDKQNLL…DPEKQRARRK (69 aa)) are cytoplasmic. Residues 47 to 50 (HYCH) carry the Mitochondrial localization signal motif. Residue Cys-49 coordinates Zn(2+). Residues 70 to 90 (LYVASAICLVFMIGEIIGGYL) form a helical membrane-spanning segment. The Lumenal portion of the chain corresponds to 91-99 (AQSLAIMTD). The chain crosses the membrane as a helical span at residues 100 to 120 (AAHLLTDFASMLISLFALWVS). Residues His-102 and Asp-106 each contribute to the Zn(2+) site. The Cytoplasmic segment spans residues 121–136 (SRPATKTMNFGWHRAE). The chain crosses the membrane as a helical span at residues 137-157 (ILGALLSVLSIWVVTGVLVYL). Residues 158–172 (AVQRLISGDYEIKGD) lie on the Lumenal side of the membrane. A helical transmembrane segment spans residues 173–193 (TMLITSGCAVAVNLIMGLALH). The Cytoplasmic portion of the chain corresponds to 194–219 (QSGHGHSHGNSRDDSSQQQNPSVRAA). The chain crosses the membrane as a helical span at residues 220 to 240 (FIHVIGDLLQSVGVLVAAYII). Positions 222 and 226 each coordinate Zn(2+). The Lumenal portion of the chain corresponds to 241 to 248 (YFKPEYKY). Residues 249-269 (VDPICTFLFSILVLGTTLTIL) form a helical membrane-spanning segment. At 270-303 (RDVILVLMEGTPKGVDFTTVKNLLLSVDGVEALH) the chain is on the cytoplasmic side. The Lysosomal targeting motif signature appears at 293–294 (LL). At Ser-295 the chain carries Phosphoserine. Zn(2+) contacts are provided by His-303, His-320, and Glu-354. Residues 304–324 (SLHIWALTVAQPVLSVHIAIA) traverse the membrane as a helical segment. Topologically, residues 325–371 (QNADAQAVLKVARDRLQGKFNFHTMTIQIEKYSEDMKNCQACQGPLE) are lumenal.

It belongs to the cation diffusion facilitator (CDF) transporter (TC 2.A.4) family. SLC30A subfamily. Homodimer. Interacts (via lysosomal targeting motif) with AP3D1; in AP-3-mediated transport to lysosomes. Interacts with TMEM163. Post-translationally, phosphorylated at Ser-295. Phosphorylation at Ser-295 prevents localization to lysosomes. Dephosphorylation of Ser-295 which triggers localization to lysosomes, accumulation of zinc into lysosomes and lysosomal-mediated cell death is induced by TNF-alpha.

It localises to the cytoplasmic vesicle. The protein localises to the secretory vesicle membrane. Its subcellular location is the zymogen granule membrane. It is found in the endosome membrane. The protein resides in the lysosome membrane. It localises to the mitochondrion inner membrane. The protein localises to the cell membrane. The catalysed reaction is Zn(2+)(in) + 2 H(+)(out) = Zn(2+)(out) + 2 H(+)(in). Electroneutral proton-coupled antiporter concentrating zinc ions into a variety of intracellular organelles including endosomes, zymogen granules and mitochondria. Thereby, plays a crucial role in cellular zinc homeostasis to confer upon cells protection against its potential cytotoxicity. Regulates the zinc concentration of milk, through the transport of zinc ions into secretory vesicles of mammary cells. By concentrating zinc ions into lysosomes participates to lysosomal-mediated cell death during early mammary gland involution. In terms of biological role, electroneutral proton-coupled antiporter mediating the efflux of zinc ions through the plasma membrane. The chain is Proton-coupled zinc antiporter SLC30A2 from Mus musculus (Mouse).